Consider the following 133-residue polypeptide: Stage III sporulation protein AD (133 aa).

3 consecutive transmembrane segments (helical) span residues 2-22 (QIDIVQIVGLGLIATFLSLIV), 29-49 (FAFLIVVFAGCAIFLYLVDQI), and 108-128 (ILILVMAVPILTVIIETILGL).

It localises to the cell membrane. The polypeptide is Stage III sporulation protein AD (spoIIIAD) (Bacillus subtilis (strain 168)).